Consider the following 78-residue polypeptide: Small ribosomal subunit protein bS18 (78 aa).

The protein belongs to the bacterial ribosomal protein bS18 family. In terms of assembly, part of the 30S ribosomal subunit. Forms a tight heterodimer with protein bS6.

Functionally, binds as a heterodimer with protein bS6 to the central domain of the 16S rRNA, where it helps stabilize the platform of the 30S subunit. The chain is Small ribosomal subunit protein bS18 from Geobacillus sp. (strain WCH70).